The following is a 328-amino-acid chain: D-cysteine desulfhydrase (328 aa).

Lys-51 bears the N6-(pyridoxal phosphate)lysine mark.

It belongs to the ACC deaminase/D-cysteine desulfhydrase family. In terms of assembly, homodimer. Pyridoxal 5'-phosphate serves as cofactor.

It carries out the reaction D-cysteine + H2O = hydrogen sulfide + pyruvate + NH4(+) + H(+). Its function is as follows. Catalyzes the alpha,beta-elimination reaction of D-cysteine and of several D-cysteine derivatives. It could be a defense mechanism against D-cysteine. In Salmonella typhi, this protein is D-cysteine desulfhydrase.